The chain runs to 259 residues: Glutamate racemase (259 aa).

Residues 7–8 and 39–40 each bind substrate; these read DS and YG. C70 functions as the Proton donor/acceptor in the catalytic mechanism. 71–72 is a substrate binding site; sequence NT. The active-site Proton donor/acceptor is C180. 181-182 provides a ligand contact to substrate; the sequence is TH.

Belongs to the aspartate/glutamate racemases family.

The catalysed reaction is L-glutamate = D-glutamate. The protein operates within cell wall biogenesis; peptidoglycan biosynthesis. In terms of biological role, provides the (R)-glutamate required for cell wall biosynthesis. In Persephonella marina (strain DSM 14350 / EX-H1), this protein is Glutamate racemase.